The following is a 182-amino-acid chain: CASP-like protein 5B1 (182 aa).

A disordered region spans residues 1-20 (GDASHAVDHPIGGHPEHEHD). Topologically, residues 1 to 41 (GDASHAVDHPIGGHPEHEHDLREEEGPLIFPMKDLPGTPGT) are cytoplasmic. A helical membrane pass occupies residues 42–62 (VGGLALRMGQFIFAAASVVIM). The Extracellular portion of the chain corresponds to 63–73 (VTSDEFINFTA). Asn-70 is a glycosylation site (N-linked (GlcNAc...) asparagine). A helical transmembrane segment spans residues 74–94 (FCYLAAAMALQFLWSFVLATI). The Cytoplasmic portion of the chain corresponds to 95–108 (DVYALLIKRGLPNS). The chain crosses the membrane as a helical span at residues 109–129 (ILLSLFVVGDWVTATLSLAAA). Over 130–159 (CSTAGITVLFDKDLNYCDQMHCRRYQLSAT) the chain is Extracellular. A helical transmembrane segment spans residues 160–180 (MAFFSWVLIAISSLITLLLLV). Residues 181–182 (SE) lie on the Cytoplasmic side of the membrane.

The protein belongs to the Casparian strip membrane proteins (CASP) family. Homodimer and heterodimers.

The protein resides in the cell membrane. This Picea sitchensis (Sitka spruce) protein is CASP-like protein 5B1.